Reading from the N-terminus, the 166-residue chain is Phosphopantetheine adenylyltransferase (166 aa).

S9 serves as a coordination point for substrate. Residues 9-10 (SY) and H17 contribute to the ATP site. Substrate contacts are provided by K41, I75, and K89. Residues 90 to 92 (GLR), E100, and 124 to 130 (LEHISSS) each bind ATP.

Belongs to the bacterial CoaD family. In terms of assembly, homohexamer. The cofactor is Mg(2+).

The protein resides in the cytoplasm. The enzyme catalyses (R)-4'-phosphopantetheine + ATP + H(+) = 3'-dephospho-CoA + diphosphate. It functions in the pathway cofactor biosynthesis; coenzyme A biosynthesis; CoA from (R)-pantothenate: step 4/5. In terms of biological role, reversibly transfers an adenylyl group from ATP to 4'-phosphopantetheine, yielding dephospho-CoA (dPCoA) and pyrophosphate. The sequence is that of Phosphopantetheine adenylyltransferase from Bifidobacterium longum (strain DJO10A).